The sequence spans 761 residues: 1,2-alpha-glucosylglycerol phosphorylase (761 aa).

Position 327 to 328 (327 to 328) interacts with glycerol; that stretch reads YQ. Residue 333 to 334 participates in substrate binding; it reads WD. Glu475 acts as the Proton donor in catalysis. A substrate-binding site is contributed by 587–588; the sequence is KQ.

Belongs to the glycosyl hydrolase 65 family. As to quaternary structure, homodimer.

It catalyses the reaction 2-O-(alpha-D-glucopyranosyl)glycerol + phosphate = beta-D-glucose 1-phosphate + glycerol. Its function is as follows. Catalyzes both the (1) reversible phosphorolysis of 2-O-alpha-D-glucopyranosyl-sn-glycerol (GG) from beta-D-glucose 1-phosphate (betaGlc1P) and glycerol and (2) the hydrolysis of betaGlc1P. the betaGlc1P hydrolysis is a glucosyl-transfer reaction to an acceptor water molecule that produces an anomer-inverted alpha-glucose, not a phosphatase-type reaction. In the absence of glycerol produces alpha-D-glucopyranose and phosphate from beta-D-glucopyranose 1-phosphate. The sequence is that of 1,2-alpha-glucosylglycerol phosphorylase from Bacillus selenitireducens (strain ATCC 700615 / DSM 15326 / MLS10).